The sequence spans 583 residues: Arginine--tRNA ligase (583 aa).

The 'HIGH' region signature appears at 121 to 131 (ANPTGPLHLGH).

This sequence belongs to the class-I aminoacyl-tRNA synthetase family. In terms of assembly, monomer.

Its subcellular location is the cytoplasm. It carries out the reaction tRNA(Arg) + L-arginine + ATP = L-arginyl-tRNA(Arg) + AMP + diphosphate. The polypeptide is Arginine--tRNA ligase (argS) (Aquifex aeolicus (strain VF5)).